We begin with the raw amino-acid sequence, 185 residues long: Ribosome-recycling factor (185 aa).

Belongs to the RRF family.

It is found in the cytoplasm. Functionally, responsible for the release of ribosomes from messenger RNA at the termination of protein biosynthesis. May increase the efficiency of translation by recycling ribosomes from one round of translation to another. In terms of biological role, plays a role in sporulation. This Bacillus subtilis (strain 168) protein is Ribosome-recycling factor.